The chain runs to 211 residues: MAIPMSMAMATPTDSVSRVWSMSSLKSALPSTASLRLPSSSSRRPVTLRLPISSPSLPSFSGLSPVNPLLSIGLPDWQSFENGFKIVDGGGRIYAMRHGRRVPKLNRPPDQRKALLRGLTTQLLKHGRIKTTRARASAMRKFVDKMITLAKDGSLHKRRQALGYIYEKQIVHALFAEVPDRYGERNGGYTRIIRTLPRRGDNAPMAYIELV.

The transit peptide at 1 to 95 directs the protein to the chloroplast; it reads MAIPMSMAMA…IVDGGGRIYA (95 aa).

This sequence belongs to the bacterial ribosomal protein bL17 family. As to quaternary structure, part of the 50S ribosomal subunit.

The protein resides in the plastid. It localises to the chloroplast. Functionally, this protein binds directly to 23S ribosomal RNA. The protein is Large ribosomal subunit protein bL17c (RPL17) of Arabidopsis thaliana (Mouse-ear cress).